The chain runs to 332 residues: mRNA-decapping enzyme 1 (332 aa).

The segment covering 141–173 has biased composition (low complexity); that stretch reads ARAAKAASEAPQASVPAPTQAPAAPAQAPQMAP. The disordered stretch occupies residues 141–175; sequence ARAAKAASEAPQASVPAPTQAPAAPAQAPQMAPQA.

The protein belongs to the DCP1 family. In terms of assembly, may be a component of the decapping complex composed of dcap-1 and dcap-2. As to expression, expressed in neurons including touch receptor neurons and motor neurons.

Its subcellular location is the cytoplasm. The protein localises to the cytoplasmic granule. Its function is as follows. Component of the decapping complex necessary for the degradation of mRNAs, both in normal mRNA turnover and in nonsense-mediated mRNA decay. In contrast to orthologs, does not possess decapping activity and does not remove the 7-methyl guanine cap structure from mRNA molecules. In the nervous system, negatively regulates the expression of insulin-like peptide ins-7, which in turn promotes longevity. This may in part be through promoting the activity of daf-16 in distal tissues. Required for the developmental axon guidance and regrowth of PLM touch receptor neurons. In ADL sensory neurons, plays a role in ciliary shape formation. Acts in neurons to promote larval survival at high temperatures by negatively regulating lin-14 expression. This chain is mRNA-decapping enzyme 1, found in Caenorhabditis elegans.